Consider the following 400-residue polypeptide: tRNA-specific 2-thiouridylase MnmA (400 aa).

ATP is bound by residues 19–26 and Leu-45; that span reads AMSGGVDS. The active-site Nucleophile is Cys-113. Cys-113 and Cys-210 are disulfide-bonded. Gly-137 serves as a coordination point for ATP. Positions 160–162 are interaction with tRNA; sequence RDQ. Cys-210 acts as the Cysteine persulfide intermediate in catalysis.

Belongs to the MnmA/TRMU family.

It is found in the cytoplasm. The catalysed reaction is S-sulfanyl-L-cysteinyl-[protein] + uridine(34) in tRNA + AH2 + ATP = 2-thiouridine(34) in tRNA + L-cysteinyl-[protein] + A + AMP + diphosphate + H(+). Functionally, catalyzes the 2-thiolation of uridine at the wobble position (U34) of tRNA, leading to the formation of s(2)U34. The chain is tRNA-specific 2-thiouridylase MnmA from Nitrobacter winogradskyi (strain ATCC 25391 / DSM 10237 / CIP 104748 / NCIMB 11846 / Nb-255).